A 339-amino-acid polypeptide reads, in one-letter code: Centromere protein N (339 aa).

3 positions are modified to phosphoserine: Ser226, Ser235, and Ser282.

This sequence belongs to the CENP-N/CHL4 family. Component of the CENPA-NAC complex, at least composed of CENPA, CENPC, CENPH, CENPM, CENPN, CENPT and CENPU. The CENPA-NAC complex interacts with the CENPA-CAD complex, composed of CENPI, CENPK, CENPL, CENPO, CENPP, CENPQ, CENPR and CENPS. Interacts directly with CENPA. Identified in a centromere complex containing histones H2A, H2B and H4, and at least CENPA, CENPB, CENPC, CENPT, CENPN, HJURP, SUPT16H, SSRP1 and RSF1.

The protein resides in the nucleus. It is found in the chromosome. The protein localises to the centromere. It localises to the kinetochore. Its function is as follows. Component of the CENPA-NAC (nucleosome-associated) complex, a complex that plays a central role in assembly of kinetochore proteins, mitotic progression and chromosome segregation. The CENPA-NAC complex recruits the CENPA-CAD (nucleosome distal) complex and may be involved in incorporation of newly synthesized CENPA into centromeres. CENPN is the first protein to bind specifically to CENPA nucleosomes and the direct binding of CENPA nucleosomes by CENPN is required for centromere assembly. Required for chromosome congression and efficiently align the chromosomes on a metaphase plate. The chain is Centromere protein N (CENPN) from Homo sapiens (Human).